The following is a 563-amino-acid chain: L-lactate permease (563 aa).

A run of 14 helical transmembrane segments spans residues 14-34 (LLLS…ALAI), 37-57 (MKGY…AVLV), 73-93 (AVYG…LYKI), 131-151 (GAAG…GLGF), 157-177 (AGIC…GIPI), 194-214 (MVGR…IIIM), 220-240 (ALEI…VQYL), 249-269 (LPDV…LKWW), 304-324 (IFKA…WGIP), 381-401 (LGSA…ITAI), 419-439 (LPIL…SSGM), 448-468 (ALTG…GVFI), 506-526 (VTGK…VGLA), and 542-562 (FLLL…SWMI).

This sequence belongs to the lactate permease family.

The protein resides in the cell membrane. In terms of biological role, is the principal permease for the uptake of L-lactate in B.subtilis. The protein is L-lactate permease (lutP) of Bacillus subtilis (strain 168).